Here is a 115-residue protein sequence, read N- to C-terminus: NADH-ubiquinone oxidoreductase chain 3 (115 aa).

3 consecutive transmembrane segments (helical) span residues 4-24 (LMIL…AFWL), 55-75 (FFLV…LLPL), and 84-104 (INMM…GLAY).

This sequence belongs to the complex I subunit 3 family. Core subunit of respiratory chain NADH dehydrogenase (Complex I) which is composed of 45 different subunits. Interacts with TMEM186. Interacts with TMEM242.

The protein resides in the mitochondrion inner membrane. The catalysed reaction is a ubiquinone + NADH + 5 H(+)(in) = a ubiquinol + NAD(+) + 4 H(+)(out). Functionally, core subunit of the mitochondrial membrane respiratory chain NADH dehydrogenase (Complex I) which catalyzes electron transfer from NADH through the respiratory chain, using ubiquinone as an electron acceptor. Essential for the catalytic activity of complex I. The chain is NADH-ubiquinone oxidoreductase chain 3 from Podomys floridanus (Florida mouse).